The chain runs to 389 residues: S-adenosylmethionine synthase (389 aa).

His19 is an ATP binding site. Asp21 is a Mg(2+) binding site. Glu47 serves as a coordination point for K(+). Residues Glu60 and Gln103 each contribute to the L-methionine site. A flexible loop region spans residues 103 to 113 (QSVDIAQGVDR). ATP is bound by residues 168–170 (DGK), 234–235 (RF), Asp243, 249–250 (RK), Ala266, and Lys270. Asp243 serves as a coordination point for L-methionine. Lys274 is an L-methionine binding site.

The protein belongs to the AdoMet synthase family. Homotetramer; dimer of dimers. Requires Mg(2+) as cofactor. It depends on K(+) as a cofactor.

Its subcellular location is the cytoplasm. It carries out the reaction L-methionine + ATP + H2O = S-adenosyl-L-methionine + phosphate + diphosphate. It participates in amino-acid biosynthesis; S-adenosyl-L-methionine biosynthesis; S-adenosyl-L-methionine from L-methionine: step 1/1. In terms of biological role, catalyzes the formation of S-adenosylmethionine (AdoMet) from methionine and ATP. The overall synthetic reaction is composed of two sequential steps, AdoMet formation and the subsequent tripolyphosphate hydrolysis which occurs prior to release of AdoMet from the enzyme. In Maridesulfovibrio salexigens (strain ATCC 14822 / DSM 2638 / NCIMB 8403 / VKM B-1763) (Desulfovibrio salexigens), this protein is S-adenosylmethionine synthase.